Reading from the N-terminus, the 487-residue chain is UPF0324 membrane protein NE0724 (487 aa).

The next 11 helical transmembrane spans lie at 19-38 (WAVW…LWGW), 71-93 (PALS…AWSM), 100-119 (FFIG…IIGN), 139-161 (LSLG…GNFF), 181-200 (AIVF…AGFI), 204-226 (VMTG…YALG), 269-291 (VSIL…YTAI), 350-369 (IWID…VWVY), 389-411 (FPKF…SSGS), 426-443 (GPMR…IGII), and 456-478 (ALLY…AWIF).

It belongs to the UPF0324 family.

The protein resides in the cell membrane. The chain is UPF0324 membrane protein NE0724 from Nitrosomonas europaea (strain ATCC 19718 / CIP 103999 / KCTC 2705 / NBRC 14298).